The chain runs to 40 residues: Competence and sporulation stimulating factor (40 aa).

The propeptide occupies Met1–Thr35.

Belongs to the Phr family. Interacts with RapC and inhibits its interaction with ComA. Secreted with a propeptide domain, which is cleaved in the cell wall by the secreted serine proteases subtilisin, Epr and Vpr to produce a mature signaling peptide. Contains a predicted signal peptide cleavage site in the N-terminal region, however the propeptide is probably subject to only one processing event, at the N-terminal end of the mature peptide.

The protein localises to the secreted. It is found in the cytoplasm. Its subcellular location is the host cell. Its function is as follows. Signaling molecule that serves as a cell density signal for both genetic competence development and sporulation. Secreted during production, but the mature peptide acts intracellularly, indicating that it needs to be imported into the cell to function. At low concentrations, CSF stimulates expression of the genes controlled by ComA, a transcriptional factor that regulates the development of genetic competence. It includes the srfA operon, which encodes a small protein, ComS, required for competence development, and the surfactin biosynthetic enzymes. Acts by inhibiting RapC, which regulates the activity of ComA. At high concentrations, it inhibits expression of those same ComA-controlled genes, maybe by inhibiting activity of the kinase ComP. In addition, high concentrations of CSF can stimulate sporulation under some conditions. Also inhibits RapB activity, with lower efficiency, but does not act on RapA. Is probably involved in the quorum sensing control of sporulation. CSF is a species-specific signaling molecule that partially compensates for the lack of ComX-mediated communication between different strains of B.subtilis. B.subtilis is a well-characterized soil and water saprophyte, but it is also found in enteric flora of many species, including humans. In this environment, CSF can be transported into human intestinal epithelia via OCTN2, a host cell membrane transporter, and can induce cytoprotective heat shock proteins contributing to intestinal homeostasis. In terms of biological role, in addition, in non-domesticated swarming strains of B.subtilis, the residual propeptide exposed on the exterior of the cytoplasmic membrane may have an extracellular role in swarming. This function is probably not dependent on CSF. The sequence is that of Competence and sporulation stimulating factor from Bacillus subtilis (strain 168).